Reading from the N-terminus, the 217-residue chain is MRIIMLGAPGAGKGTQAQFITERFEIPQISTGDMLRAAVKAESELGLQVKEVMASGGLVSDDIIIALIEERIQQPDCKNGFLLDGFPRTIPQAEALKDQGIAIDYVVEISVEDEEIVSRLSGRRVHEGSGRIYHVKYDPPKVEGKDDETGEALIQREDDKEETVRKRLKIYHEQTAPLVGFYQSWAEKAPADAPRYVRVEGVGSLDSIRDQILSQLK.

10–15 contributes to the ATP binding site; sequence GAGKGT. Residues 30–59 are NMP; that stretch reads STGDMLRAAVKAESELGLQVKEVMASGGLV. Residues T31, R36, 57–59, 85–88, and Q92 contribute to the AMP site; these read GLV and GFPR. The interval 122-159 is LID; it reads GRRVHEGSGRIYHVKYDPPKVEGKDDETGEALIQREDD. ATP contacts are provided by residues R123 and 132–133; that span reads IY. R156 and R167 together coordinate AMP. G203 lines the ATP pocket.

The protein belongs to the adenylate kinase family. In terms of assembly, monomer.

It localises to the cytoplasm. It carries out the reaction AMP + ATP = 2 ADP. It participates in purine metabolism; AMP biosynthesis via salvage pathway; AMP from ADP: step 1/1. Catalyzes the reversible transfer of the terminal phosphate group between ATP and AMP. Plays an important role in cellular energy homeostasis and in adenine nucleotide metabolism. This Marinobacter nauticus (strain ATCC 700491 / DSM 11845 / VT8) (Marinobacter aquaeolei) protein is Adenylate kinase.